A 461-amino-acid chain; its full sequence is Probable outer membrane lipoprotein SilC (461 aa).

The first 17 residues, 1-17, serve as a signal peptide directing secretion; the sequence is MFKLKLLSISTIFILAG. Cysteine 18 carries N-palmitoyl cysteine lipidation. Cysteine 18 carries the S-diacylglycerol cysteine lipid modification.

This sequence belongs to the outer membrane factor (OMF) (TC 1.B.17) family.

The protein localises to the cell outer membrane. In terms of biological role, component of the sil cation-efflux system that confers resistance to silver. May be part of a three-component cation/proton antiporter. The chain is Probable outer membrane lipoprotein SilC (silC) from Salmonella typhimurium.